Reading from the N-terminus, the 474-residue chain is Ribulose bisphosphate carboxylase large chain (474 aa).

K13 carries the N6,N6,N6-trimethyllysine modification. Residues N122 and T172 each contribute to the substrate site. The Proton acceptor role is filled by K174. K176 lines the substrate pocket. K200, D202, and E203 together coordinate Mg(2+). An N6-carboxylysine modification is found at K200. H293 (proton acceptor) is an active-site residue. Substrate-binding residues include R294, H326, and S378.

Belongs to the RuBisCO large chain family. Type I subfamily. In terms of assembly, heterohexadecamer of 8 large chains and 8 small chains; disulfide-linked. The disulfide link is formed within the large subunit homodimers. Mg(2+) is required as a cofactor. The disulfide bond which can form in the large chain dimeric partners within the hexadecamer appears to be associated with oxidative stress and protein turnover.

The protein resides in the plastid. The protein localises to the chloroplast. The enzyme catalyses 2 (2R)-3-phosphoglycerate + 2 H(+) = D-ribulose 1,5-bisphosphate + CO2 + H2O. It carries out the reaction D-ribulose 1,5-bisphosphate + O2 = 2-phosphoglycolate + (2R)-3-phosphoglycerate + 2 H(+). RuBisCO catalyzes two reactions: the carboxylation of D-ribulose 1,5-bisphosphate, the primary event in carbon dioxide fixation, as well as the oxidative fragmentation of the pentose substrate in the photorespiration process. Both reactions occur simultaneously and in competition at the same active site. The chain is Ribulose bisphosphate carboxylase large chain from Dendrophthora clavata (Columbian mistletoe).